A 215-amino-acid chain; its full sequence is Probable phosphoglycerate mutase GpmB (215 aa).

Substrate contacts are provided by residues 8 to 15 (RHGETQWN), 21 to 22 (QG), Arg58, Arg60, 82 to 85 (ELNM), 104 to 105 (RR), and 151 to 152 (GI). His9 (tele-phosphohistidine intermediate) is an active-site residue. The active-site Proton donor/acceptor is Glu82.

Belongs to the phosphoglycerate mutase family. GpmB subfamily.

It catalyses the reaction (2R)-2-phosphoglycerate = (2R)-3-phosphoglycerate. It functions in the pathway carbohydrate degradation; glycolysis; pyruvate from D-glyceraldehyde 3-phosphate: step 3/5. This chain is Probable phosphoglycerate mutase GpmB, found in Escherichia coli O9:H4 (strain HS).